The following is a 177-amino-acid chain: Large ribosomal subunit protein uL6 (177 aa).

The segment covering 152–171 (RPPEPYKGKGVRYDDEEVRR) has biased composition (basic and acidic residues). The disordered stretch occupies residues 152-177 (RPPEPYKGKGVRYDDEEVRRKEAKKK).

The protein belongs to the universal ribosomal protein uL6 family. In terms of assembly, part of the 50S ribosomal subunit.

Its function is as follows. This protein binds to the 23S rRNA, and is important in its secondary structure. It is located near the subunit interface in the base of the L7/L12 stalk, and near the tRNA binding site of the peptidyltransferase center. The chain is Large ribosomal subunit protein uL6 from Shewanella sp. (strain ANA-3).